The following is a 299-amino-acid chain: Protease HtpX homolog (299 aa).

2 helical membrane-spanning segments follow: residues 15 to 35 (ILLL…GYLF) and 39 to 59 (GLGG…SMIF). H143 lines the Zn(2+) pocket. Residue E144 is part of the active site. Residue H147 participates in Zn(2+) binding. The next 2 helical transmembrane spans lie at 158–178 (IAVA…RMMW) and 198–218 (IIML…ATLV). E227 is a binding site for Zn(2+).

The protein belongs to the peptidase M48B family. Zn(2+) serves as cofactor.

It localises to the cell membrane. The polypeptide is Protease HtpX homolog (Streptococcus pneumoniae serotype 4 (strain ATCC BAA-334 / TIGR4)).